A 157-amino-acid chain; its full sequence is 2-C-methyl-D-erythritol 2,4-cyclodiphosphate synthase (157 aa).

Aspartate 8 and histidine 10 together coordinate a divalent metal cation. 4-CDP-2-C-methyl-D-erythritol 2-phosphate-binding positions include 8–10 and 34–35; these read DVH and HS. An a divalent metal cation-binding site is contributed by histidine 42. 4-CDP-2-C-methyl-D-erythritol 2-phosphate is bound by residues 56-58, 61-65, 100-106, 132-135, and phenylalanine 139; these read DIG, FPDTD, AQKPKMA, and TTEE.

It belongs to the IspF family. In terms of assembly, homotrimer. It depends on a divalent metal cation as a cofactor.

It catalyses the reaction 4-CDP-2-C-methyl-D-erythritol 2-phosphate = 2-C-methyl-D-erythritol 2,4-cyclic diphosphate + CMP. It functions in the pathway isoprenoid biosynthesis; isopentenyl diphosphate biosynthesis via DXP pathway; isopentenyl diphosphate from 1-deoxy-D-xylulose 5-phosphate: step 4/6. Involved in the biosynthesis of isopentenyl diphosphate (IPP) and dimethylallyl diphosphate (DMAPP), two major building blocks of isoprenoid compounds. Catalyzes the conversion of 4-diphosphocytidyl-2-C-methyl-D-erythritol 2-phosphate (CDP-ME2P) to 2-C-methyl-D-erythritol 2,4-cyclodiphosphate (ME-CPP) with a corresponding release of cytidine 5-monophosphate (CMP). In Clostridium novyi (strain NT), this protein is 2-C-methyl-D-erythritol 2,4-cyclodiphosphate synthase.